Here is a 252-residue protein sequence, read N- to C-terminus: Small ribosomal subunit protein uS2A (252 aa).

Serine 2 carries the N-acetylserine modification. Residues 209-252 form a disordered region; the sequence is EVEQQVAEEATTEEAGEEEAKEEVTEEQAEATEWAEENADNVEW. The segment covering 218 to 252 has biased composition (acidic residues); that stretch reads ATTEEAGEEEAKEEVTEEQAEATEWAEENADNVEW.

This sequence belongs to the universal ribosomal protein uS2 family. Component of the small ribosomal subunit. Mature ribosomes consist of a small (40S) and a large (60S) subunit. The 40S subunit contains about 33 different proteins and 1 molecule of RNA (18S). The 60S subunit contains about 49 different proteins and 3 molecules of RNA (25S, 5.8S and 5S). Interacts with RPS21.

The protein resides in the cytoplasm. Required for the assembly and/or stability of the 40S ribosomal subunit. Required for the processing of the 20S rRNA-precursor to mature 18S rRNA in a late step of the maturation of 40S ribosomal subunits. The polypeptide is Small ribosomal subunit protein uS2A (Saccharomyces cerevisiae (strain RM11-1a) (Baker's yeast)).